A 914-amino-acid polypeptide reads, in one-letter code: Valine--tRNA ligase (914 aa).

Residues 47 to 57 (PYPTGELHMGH) carry the 'HIGH' region motif. The 'KMSKS' region motif lies at 552 to 556 (KMSKS). Residue Lys555 coordinates ATP.

Belongs to the class-I aminoacyl-tRNA synthetase family. ValS type 2 subfamily.

It is found in the cytoplasm. The catalysed reaction is tRNA(Val) + L-valine + ATP = L-valyl-tRNA(Val) + AMP + diphosphate. Functionally, catalyzes the attachment of valine to tRNA(Val). As ValRS can inadvertently accommodate and process structurally similar amino acids such as threonine, to avoid such errors, it has a 'posttransfer' editing activity that hydrolyzes mischarged Thr-tRNA(Val) in a tRNA-dependent manner. The chain is Valine--tRNA ligase from Methanopyrus kandleri (strain AV19 / DSM 6324 / JCM 9639 / NBRC 100938).